The primary structure comprises 143 residues: uncharacterized protein (143 aa).

An HTH marR-type domain is found at 11-139 (EYELTTFIRR…FGELLQRMNK (129 aa)). A DNA-binding region (H-T-H motif) is located at residues 53 to 76 (VKELAESFKLDISTLSRQAAALEA).

This is an uncharacterized protein from Bacillus subtilis (strain 168).